Here is a 327-residue protein sequence, read N- to C-terminus: tRNA uridine(34) hydroxylase (327 aa).

Residues 130 to 224 (LDEDTVVLDT…YGKDPEVQGE (95 aa)) enclose the Rhodanese domain. Cys-184 acts as the Cysteine persulfide intermediate in catalysis.

It belongs to the TrhO family.

It carries out the reaction uridine(34) in tRNA + AH2 + O2 = 5-hydroxyuridine(34) in tRNA + A + H2O. In terms of biological role, catalyzes oxygen-dependent 5-hydroxyuridine (ho5U) modification at position 34 in tRNAs. The sequence is that of tRNA uridine(34) hydroxylase from Streptococcus thermophilus (strain ATCC BAA-491 / LMD-9).